The following is a 602-amino-acid chain: Type 2 DNA topoisomerase 6 subunit B (602 aa).

ATP is bound by residues Asn-40, Asp-71, 92-93, 102-109, and Lys-425; these read SR and GQQGIGIS.

Belongs to the TOP6B family. Homodimer. Heterotetramer of two Top6A and two Top6B chains.

It carries out the reaction ATP-dependent breakage, passage and rejoining of double-stranded DNA.. Functionally, relaxes both positive and negative superturns and exhibits a strong decatenase activity. The polypeptide is Type 2 DNA topoisomerase 6 subunit B (Archaeoglobus fulgidus (strain ATCC 49558 / DSM 4304 / JCM 9628 / NBRC 100126 / VC-16)).